A 270-amino-acid chain; its full sequence is Type III pantothenate kinase (270 aa).

Position 19–26 (19–26) interacts with ATP; sequence DIGNTSTT. Residues Y109 and 116 to 119 each bind substrate; that span reads GADR. D118 acts as the Proton acceptor in catalysis. A K(+)-binding site is contributed by D139. T142 is an ATP binding site. Substrate is bound at residue T194.

This sequence belongs to the type III pantothenate kinase family. As to quaternary structure, homodimer. Requires NH4(+) as cofactor. K(+) is required as a cofactor.

It localises to the cytoplasm. It catalyses the reaction (R)-pantothenate + ATP = (R)-4'-phosphopantothenate + ADP + H(+). It participates in cofactor biosynthesis; coenzyme A biosynthesis; CoA from (R)-pantothenate: step 1/5. In terms of biological role, catalyzes the phosphorylation of pantothenate (Pan), the first step in CoA biosynthesis. In Chlorobaculum tepidum (strain ATCC 49652 / DSM 12025 / NBRC 103806 / TLS) (Chlorobium tepidum), this protein is Type III pantothenate kinase.